Consider the following 423-residue polypeptide: UPF0229 protein VP0986 (423 aa).

Positions glycine 69–glutamine 112 are disordered. The segment covering glycine 93–glutamate 102 has biased composition (gly residues).

Belongs to the UPF0229 family.

The chain is UPF0229 protein VP0986 from Vibrio parahaemolyticus serotype O3:K6 (strain RIMD 2210633).